The chain runs to 385 residues: Carbamoyl phosphate synthase small chain (385 aa).

A CPSase region spans residues M1 to F196. S51, G245, and G247 together coordinate L-glutamine. Positions H197–S384 constitute a Glutamine amidotransferase type-1 domain. Residue C273 is the Nucleophile of the active site. 4 residues coordinate L-glutamine: L274, Q277, N315, and F318. Residues H357 and E359 contribute to the active site.

It belongs to the CarA family. In terms of assembly, composed of two chains; the small (or glutamine) chain promotes the hydrolysis of glutamine to ammonia, which is used by the large (or ammonia) chain to synthesize carbamoyl phosphate. Tetramer of heterodimers (alpha,beta)4.

The enzyme catalyses hydrogencarbonate + L-glutamine + 2 ATP + H2O = carbamoyl phosphate + L-glutamate + 2 ADP + phosphate + 2 H(+). The catalysed reaction is L-glutamine + H2O = L-glutamate + NH4(+). The protein operates within amino-acid biosynthesis; L-arginine biosynthesis; carbamoyl phosphate from bicarbonate: step 1/1. It functions in the pathway pyrimidine metabolism; UMP biosynthesis via de novo pathway; (S)-dihydroorotate from bicarbonate: step 1/3. Its function is as follows. Small subunit of the glutamine-dependent carbamoyl phosphate synthetase (CPSase). CPSase catalyzes the formation of carbamoyl phosphate from the ammonia moiety of glutamine, carbonate, and phosphate donated by ATP, constituting the first step of 2 biosynthetic pathways, one leading to arginine and/or urea and the other to pyrimidine nucleotides. The small subunit (glutamine amidotransferase) binds and cleaves glutamine to supply the large subunit with the substrate ammonia. The protein is Carbamoyl phosphate synthase small chain of Buchnera aphidicola subsp. Schizaphis graminum (strain Sg).